Reading from the N-terminus, the 220-residue chain is Protein-L-isoaspartate O-methyltransferase (220 aa).

The active site involves serine 67.

The protein belongs to the methyltransferase superfamily. L-isoaspartyl/D-aspartyl protein methyltransferase family.

Its subcellular location is the cytoplasm. It catalyses the reaction [protein]-L-isoaspartate + S-adenosyl-L-methionine = [protein]-L-isoaspartate alpha-methyl ester + S-adenosyl-L-homocysteine. Catalyzes the methyl esterification of L-isoaspartyl residues in peptides and proteins that result from spontaneous decomposition of normal L-aspartyl and L-asparaginyl residues. It plays a role in the repair and/or degradation of damaged proteins. In Chlorobium phaeobacteroides (strain BS1), this protein is Protein-L-isoaspartate O-methyltransferase.